The chain runs to 516 residues: uncharacterized protein (516 aa).

Positions 31-185 (ACIFLSKFDM…LDKFDIFEKF (155 aa)) constitute a uDENN domain. The 155-residue stretch at 211–365 (HLVEYLPYWT…LEVYEKLILG (155 aa)) folds into the cDENN domain. The dDENN domain maps to 367-513 (LQEDASTNAT…DISNLPECLG (147 aa)). 2 S-palmitoyl cysteine lipidation sites follow: Cys511 and Cys516.

In terms of processing, palmitoylated by AKR1.

It is found in the lipid droplet. Its function is as follows. May be involved in lipid metabolism. This is an uncharacterized protein from Saccharomyces cerevisiae (strain ATCC 204508 / S288c) (Baker's yeast).